The following is a 333-amino-acid chain: Ornithine carbamoyltransferase (333 aa).

Carbamoyl phosphate is bound by residues 56 to 59 (STRT), R107, and 134 to 137 (HPTQ). L-ornithine is bound by residues N167, D231, and 235–236 (SM). Residues 273 to 274 (CL) and R318 contribute to the carbamoyl phosphate site.

This sequence belongs to the aspartate/ornithine carbamoyltransferase superfamily. OTCase family.

The protein resides in the cytoplasm. The catalysed reaction is carbamoyl phosphate + L-ornithine = L-citrulline + phosphate + H(+). Its pathway is amino-acid degradation; L-arginine degradation via ADI pathway; carbamoyl phosphate from L-arginine: step 2/2. Functionally, reversibly catalyzes the transfer of the carbamoyl group from carbamoyl phosphate (CP) to the N(epsilon) atom of ornithine (ORN) to produce L-citrulline. The chain is Ornithine carbamoyltransferase from Clostridium botulinum (strain ATCC 19397 / Type A).